The sequence spans 630 residues: MTNIIKSFITRNTYLNKLSPSPYQFNKYYSNSISTPPTHSYEKKQQPIQNVDDKKYILTDRFNRHHTYLRISLTERCNLRCKYCMPEEGVMLSQADKILTTDEIIRLSKLFVSAGVNKIRFTGGEPLVRKDVEPLIEEVGKIKGLQKIGITTNGILLSRKLDRLHKAGVNLLNISLDTLNSDKFTLITRRLGWDRVFQSIDNALKLDNIKVKVNCVIMKGLNDMEICDFVEMTRDKSVEIRFIEYMPFDGNLWSDKKFLSYTDMIKIIHEKYPTFKKYTIEEEEPNNTSKTYHVPGFKGKVGFITSMSEHFCSSCNRLRITADGNLKVCLFGNTEVNLRDRIRDGASDQQLLEIINAAVLKKKASHAGMYEIAQNKNRPMILIGEKSKIQINFKNKSIKQKKEVKNYLLKLINSSFINSNNNNNNNNNNNNNSKLQYIQQRNYSTNKNNQNLENNEFSHITKDGKLPTMVDISDKIITKRTAHAQSILEFPSNVLSQLLNLEKNNDIDNDNNISKNKEIVSKKGPVFATSIVAGTMAVKNTSNLIPFCHPIPIESCKIEITIIDSTSVKVDCIVSMSGKTGVEMEALTGATITSLTIYDMCKALSKDIVIKETKLISKFGGKSSSPQITK.

Positions 61-298 (RFNRHHTYLR…SKTYHVPGFK (238 aa)) constitute a Radical SAM core domain. Arginine 70 provides a ligand contact to GTP. 2 residues coordinate [4Fe-4S] cluster: cysteine 77 and cysteine 81. Tyrosine 83 is a binding site for S-adenosyl-L-methionine. Cysteine 84 is a [4Fe-4S] cluster binding site. GTP is bound at residue arginine 120. Residue glycine 124 coordinates S-adenosyl-L-methionine. Threonine 151 is a binding site for GTP. Serine 175 is an S-adenosyl-L-methionine binding site. Position 212 (lysine 212) interacts with GTP. Residue methionine 246 coordinates S-adenosyl-L-methionine. Positions 312 and 315 each coordinate [4Fe-4S] cluster. GTP is bound at residue 317–319 (RLR). Cysteine 329 is a binding site for [4Fe-4S] cluster. The segment at 402 to 629 (KEVKNYLLKL…GGKSSSPQIT (228 aa)) is molybdenum cofactor biosynthesis protein C. Aspartate 599 functions as the For molybdenum cofactor biosynthesis protein C activity in the catalytic mechanism.

It in the C-terminal section; belongs to the MoaC family. The protein in the N-terminal section; belongs to the radical SAM superfamily. MoaA family. As to quaternary structure, isoform mocs1a and isoform mocs1b probably form a heterooligomer. [4Fe-4S] cluster serves as cofactor.

It catalyses the reaction GTP + AH2 + S-adenosyl-L-methionine = (8S)-3',8-cyclo-7,8-dihydroguanosine 5'-triphosphate + 5'-deoxyadenosine + L-methionine + A + H(+). The enzyme catalyses (8S)-3',8-cyclo-7,8-dihydroguanosine 5'-triphosphate = cyclic pyranopterin phosphate + diphosphate. It participates in cofactor biosynthesis; molybdopterin biosynthesis. Isoform mocs1a and isoform mocs1b probably form a complex that catalyzes the conversion of 5'-GTP to cyclic pyranopterin monophosphate (cPMP). mocs1a catalyzes the cyclization of GTP to (8S)-3',8-cyclo-7,8-dihydroguanosine 5'-triphosphate and mocs1b catalyzes the subsequent conversion of (8S)-3',8-cyclo-7,8-dihydroguanosine 5'-triphosphate to cPMP. The chain is Molybdenum cofactor biosynthesis protein 1 (mocs1) from Dictyostelium discoideum (Social amoeba).